The sequence spans 150 residues: Putative HTH-type transcriptional regulator rrf2-like (150 aa).

Positions 1-139 (MITQKMKYAL…DSLTLEDMLA (139 aa)) constitute an HTH rrf2-type domain.

This Rhodobacter capsulatus (strain ATCC BAA-309 / NBRC 16581 / SB1003) protein is Putative HTH-type transcriptional regulator rrf2-like.